A 144-amino-acid chain; its full sequence is Large ribosomal subunit protein uL15 (144 aa).

A disordered region spans residues 1–54 (MRLNTLSPAEGSKKAGKRLGRGIGSGLGKTGGRGHKGQNSRSGGGVRRGFEGGQ). The segment covering 21 to 31 (RGIGSGLGKTG) has biased composition (gly residues).

It belongs to the universal ribosomal protein uL15 family. As to quaternary structure, part of the 50S ribosomal subunit.

Binds to the 23S rRNA. This is Large ribosomal subunit protein uL15 from Enterobacter sp. (strain 638).